The primary structure comprises 945 residues: UvrABC system protein A (945 aa).

31-38 (GLSGSGKS) is an ATP binding site. The C4-type zinc finger occupies 254–281 (CPVCGHSISELEPKLFSFNNPAGACPTC). ABC transporter domains lie at 310–587 (WDRR…PDSL) and 607–937 (RDKK…HFLK). 640 to 647 (GVSGSGKS) is a binding site for ATP. A C4-type zinc finger spans residues 740 to 766 (CEACQGDGVIKVEMHFLPDIYVPCDVC).

This sequence belongs to the ABC transporter superfamily. UvrA family. As to quaternary structure, forms a heterotetramer with UvrB during the search for lesions.

The protein resides in the cytoplasm. In terms of biological role, the UvrABC repair system catalyzes the recognition and processing of DNA lesions. UvrA is an ATPase and a DNA-binding protein. A damage recognition complex composed of 2 UvrA and 2 UvrB subunits scans DNA for abnormalities. When the presence of a lesion has been verified by UvrB, the UvrA molecules dissociate. This chain is UvrABC system protein A, found in Pseudomonas aeruginosa (strain ATCC 15692 / DSM 22644 / CIP 104116 / JCM 14847 / LMG 12228 / 1C / PRS 101 / PAO1).